The following is a 128-amino-acid chain: Gastrotropin (128 aa).

Ala-2 is subject to N-acetylalanine.

It belongs to the calycin superfamily. Fatty-acid binding protein (FABP) family. In terms of tissue distribution, expressed in ovary granulosa and luteal cells.

Its subcellular location is the cytoplasm. It is found in the membrane. Binds to bile acids and is involved in enterohepatic bile acid metabolism. Required for efficient apical to basolateral transport of conjugated bile acids in ileal enterocytes. Stimulates gastric acid and pepsinogen secretion. In Mus musculus (Mouse), this protein is Gastrotropin (Fabp6).